Reading from the N-terminus, the 150-residue chain is UPF0178 protein ECA0873 (150 aa).

Belongs to the UPF0178 family.

The protein is UPF0178 protein ECA0873 of Pectobacterium atrosepticum (strain SCRI 1043 / ATCC BAA-672) (Erwinia carotovora subsp. atroseptica).